The following is a 325-amino-acid chain: ATP-dependent 6-phosphofructokinase (325 aa).

Gly12 is a binding site for ATP. 22–26 (RTIVK) serves as a coordination point for ADP. Residues 73–74 (RY) and 103–106 (GDGS) each bind ATP. Asp104 lines the Mg(2+) pocket. 126-128 (TID) provides a ligand contact to substrate. Asp128 acts as the Proton acceptor in catalysis. Residue Arg155 participates in ADP binding. Residue 170–172 (MGH) participates in substrate binding. Residues 186–188 (GAE), Lys213, and 215–217 (KRS) each bind ADP. Substrate is bound by residues Glu224, Arg246, and 252–255 (HTQR).

The protein belongs to the phosphofructokinase type A (PFKA) family. ATP-dependent PFK group I subfamily. Prokaryotic clade 'B1' sub-subfamily. As to quaternary structure, homotetramer. The cofactor is Mg(2+).

It localises to the cytoplasm. The catalysed reaction is beta-D-fructose 6-phosphate + ATP = beta-D-fructose 1,6-bisphosphate + ADP + H(+). It functions in the pathway carbohydrate degradation; glycolysis; D-glyceraldehyde 3-phosphate and glycerone phosphate from D-glucose: step 3/4. Its activity is regulated as follows. Allosterically activated by ADP and other diphosphonucleosides, and allosterically inhibited by phosphoenolpyruvate. Functionally, catalyzes the phosphorylation of D-fructose 6-phosphate to fructose 1,6-bisphosphate by ATP, the first committing step of glycolysis. This Mycoplasma mobile (strain ATCC 43663 / 163K / NCTC 11711) (Mesomycoplasma mobile) protein is ATP-dependent 6-phosphofructokinase.